The primary structure comprises 570 residues: Sulfite reductase [NADPH] hemoprotein beta-component (570 aa).

C434, C440, C479, and C483 together coordinate [4Fe-4S] cluster. A siroheme-binding site is contributed by C483.

It belongs to the nitrite and sulfite reductase 4Fe-4S domain family. As to quaternary structure, alpha(8)-beta(8). The alpha component is a flavoprotein, the beta component is a hemoprotein. The cofactor is siroheme. Requires [4Fe-4S] cluster as cofactor.

The enzyme catalyses hydrogen sulfide + 3 NADP(+) + 3 H2O = sulfite + 3 NADPH + 4 H(+). It participates in sulfur metabolism; hydrogen sulfide biosynthesis; hydrogen sulfide from sulfite (NADPH route): step 1/1. In terms of biological role, component of the sulfite reductase complex that catalyzes the 6-electron reduction of sulfite to sulfide. This is one of several activities required for the biosynthesis of L-cysteine from sulfate. The sequence is that of Sulfite reductase [NADPH] hemoprotein beta-component from Escherichia coli O7:K1 (strain IAI39 / ExPEC).